Reading from the N-terminus, the 1056-residue chain is RNA cytidine acetyltransferase (1056 aa).

286–295 (GRGKSAALGI) serves as a coordination point for ATP. Polar residues predominate over residues 433–446 (QNNTSGRESTQTAV). A disordered region spans residues 433–463 (QNNTSGRESTQTAVVSRDNKEKDSHLHSQSR). The span at 449–463 (RDNKEKDSHLHSQSR) shows a compositional bias: basic and acidic residues. Arginine 475 is a binding site for ATP. The N-acetyltransferase domain occupies 566–706 (VLLPPIDPKD…VKLRDAKTLP (141 aa)). Residues 638–640 (IAT), 645–651 (ASMGYGS), and asparagine 739 each bind acetyl-CoA. Serine 1001, serine 1007, and serine 1010 each carry phosphoserine.

It belongs to the RNA cytidine acetyltransferase family. NAT10 subfamily. In terms of assembly, interacts with TAN1. Associates with 90S pre-ribosomal particles.

Its subcellular location is the nucleus. It is found in the nucleolus. It catalyses the reaction a cytidine in 18S rRNA + acetyl-CoA + ATP + H2O = an N(4)-acetylcytidine in 18S rRNA + ADP + phosphate + CoA + H(+). The enzyme catalyses a cytidine in tRNA + acetyl-CoA + ATP + H2O = an N(4)-acetylcytidine in tRNA + ADP + phosphate + CoA + H(+). Functionally, RNA cytidine acetyltransferase with specificity toward both 18S rRNA and tRNAs. Catalyzes the formation of N(4)-acetylcytidine (ac4C) at positions 1280 and 1773 in 18S rRNA. Required for early nucleolar cleavages of precursor rRNA at sites A0, A1 and A2 during 18S rRNA synthesis. Catalyzes the formation of ac4C at position 12 in serine and leucine tRNAs. Requires the tRNA-binding adapter protein TAN1 for full tRNA acetyltransferase activity but not for 18S rRNA acetylation. The sequence is that of RNA cytidine acetyltransferase from Saccharomyces cerevisiae (strain ATCC 204508 / S288c) (Baker's yeast).